A 349-amino-acid chain; its full sequence is Inositol-tetrakisphosphate 1-kinase 2 (349 aa).

1D-myo-inositol 1,3,4-trisphosphate contacts are provided by K48 and K90. Positions 125 and 175 each coordinate ATP. 1D-myo-inositol 1,3,4-trisphosphate is bound by residues H186 and K218. Residues 207-218 (QEFVNHGGILFK) and S233 each bind ATP. Residues D298, D313, and N315 each contribute to the Mg(2+) site. N315 provides a ligand contact to 1D-myo-inositol 1,3,4-trisphosphate.

The protein belongs to the ITPK1 family. In terms of assembly, monomer. Mg(2+) is required as a cofactor.

It catalyses the reaction 1D-myo-inositol 3,4,5,6-tetrakisphosphate + ATP = 1D-myo-inositol 1,3,4,5,6-pentakisphosphate + ADP + H(+). The enzyme catalyses 1D-myo-inositol 1,3,4-trisphosphate + ATP = 1D-myo-inositol 1,3,4,5-tetrakisphosphate + ADP + H(+). The catalysed reaction is 1D-myo-inositol 1,3,4-trisphosphate + ATP = 1D-myo-inositol 1,3,4,6-tetrakisphosphate + ADP + H(+). Functionally, kinase that can phosphorylate various inositol polyphosphate such as Ins(3,4,5,6)P4 or Ins(1,3,4)P3 and participates in phytic acid biosynthesis in developing seeds. Phytic acid is the primary storage form of phosphorus in cereal grains and other plant seeds. This is Inositol-tetrakisphosphate 1-kinase 2 (ITPK2) from Oryza sativa subsp. indica (Rice).